The sequence spans 204 residues: tRNA (pseudouridine(54)-N(1))-methyltransferase (204 aa).

Positions 136 and 158 each coordinate S-adenosyl-L-methionine.

Belongs to the methyltransferase superfamily. TrmY family. As to quaternary structure, homodimer.

Its subcellular location is the cytoplasm. It catalyses the reaction pseudouridine(54) in tRNA + S-adenosyl-L-methionine = N(1)-methylpseudouridine(54) in tRNA + S-adenosyl-L-homocysteine + H(+). In terms of biological role, specifically catalyzes the N1-methylation of pseudouridine at position 54 (Psi54) in tRNAs. The chain is tRNA (pseudouridine(54)-N(1))-methyltransferase from Pyrococcus abyssi (strain GE5 / Orsay).